Consider the following 457-residue polypeptide: Succinate-semialdehyde dehydrogenase [NADP(+)] 1 (457 aa).

An NADP(+)-binding site is contributed by Gly209–Gly214. Catalysis depends on residues Glu231 and Cys265.

It belongs to the aldehyde dehydrogenase family.

It carries out the reaction succinate semialdehyde + NAD(+) + H2O = succinate + NADH + 2 H(+). It catalyses the reaction succinate semialdehyde + NADP(+) + H2O = succinate + NADPH + 2 H(+). Functionally, catalyzes the NADP(+)-dependent oxidation of succinate semialdehyde to succinate. It is believed to be the main source of succinate semialdehyde dehydrogenase activity in Mycobacterium. The polypeptide is Succinate-semialdehyde dehydrogenase [NADP(+)] 1 (gabD1) (Mycobacterium bovis (strain ATCC BAA-935 / AF2122/97)).